Here is a 75-residue protein sequence, read N- to C-terminus: uncharacterized protein (75 aa).

Positions 1–14 (MNDNNDNNNNNKNI) are enriched in low complexity. A disordered region spans residues 1-30 (MNDNNDNNNNNKNIDNVDDDNDDNDKGKYK).

This is an uncharacterized protein from Dictyostelium discoideum (Social amoeba).